Consider the following 569-residue polypeptide: Glutamate--tRNA ligase (569 aa).

Residues 110–120 carry the 'HIGH' region motif; that stretch reads PNPNGPPTLGS.

The protein belongs to the class-I aminoacyl-tRNA synthetase family. Glutamate--tRNA ligase type 2 subfamily.

Its subcellular location is the cytoplasm. The catalysed reaction is tRNA(Glu) + L-glutamate + ATP = L-glutamyl-tRNA(Glu) + AMP + diphosphate. Functionally, catalyzes the attachment of glutamate to tRNA(Glu) in a two-step reaction: glutamate is first activated by ATP to form Glu-AMP and then transferred to the acceptor end of tRNA(Glu). The sequence is that of Glutamate--tRNA ligase from Methanococcoides burtonii (strain DSM 6242 / NBRC 107633 / OCM 468 / ACE-M).